The sequence spans 65 residues: Photosystem II reaction center protein J (65 aa).

The helical transmembrane segment at 35–55 (LWLVATAGGTAVIFVLGIFFY) threads the bilayer.

It belongs to the PsbJ family. In terms of assembly, PSII is composed of 1 copy each of membrane proteins PsbA, PsbB, PsbC, PsbD, PsbE, PsbF, PsbH, PsbI, PsbJ, PsbK, PsbL, PsbM, PsbT, PsbX, PsbY, Psb30/Ycf12, peripheral proteins PsbO, CyanoQ (PsbQ), PsbU, PsbV and a large number of cofactors. It forms dimeric complexes.

It localises to the cellular thylakoid membrane. Functionally, one of the components of the core complex of photosystem II (PSII). PSII is a light-driven water:plastoquinone oxidoreductase that uses light energy to abstract electrons from H(2)O, generating O(2) and a proton gradient subsequently used for ATP formation. It consists of a core antenna complex that captures photons, and an electron transfer chain that converts photonic excitation into a charge separation. This is Photosystem II reaction center protein J from Prochlorococcus marinus (strain NATL1A).